The following is a 355-amino-acid chain: DNA polymerase IV (355 aa).

Residues 7 to 188 (IIHIDMDCFY…LPVRKLFGVG (182 aa)) enclose the UmuC domain. Mg(2+) contacts are provided by D11 and D106. E107 is an active-site residue.

The protein belongs to the DNA polymerase type-Y family. As to quaternary structure, monomer. Requires Mg(2+) as cofactor.

Its subcellular location is the cytoplasm. The enzyme catalyses DNA(n) + a 2'-deoxyribonucleoside 5'-triphosphate = DNA(n+1) + diphosphate. In terms of biological role, poorly processive, error-prone DNA polymerase involved in untargeted mutagenesis. Copies undamaged DNA at stalled replication forks, which arise in vivo from mismatched or misaligned primer ends. These misaligned primers can be extended by PolIV. Exhibits no 3'-5' exonuclease (proofreading) activity. May be involved in translesional synthesis, in conjunction with the beta clamp from PolIII. The polypeptide is DNA polymerase IV (Legionella pneumophila (strain Paris)).